Here is a 450-residue protein sequence, read N- to C-terminus: 3-phosphoshikimate 1-carboxyvinyltransferase (450 aa).

A disordered region spans residues 1-25 (MSAHGDPKPMTARKGGALTGTAEVP). Lysine 28, serine 29, and arginine 33 together coordinate 3-phosphoshikimate. Residue lysine 28 coordinates phosphoenolpyruvate. Phosphoenolpyruvate is bound by residues glycine 101 and arginine 129. Residues serine 174, glutamine 176, aspartate 327, and lysine 354 each contribute to the 3-phosphoshikimate site. Glutamine 176 contributes to the phosphoenolpyruvate binding site. The Proton acceptor role is filled by aspartate 327. Residues arginine 358 and arginine 403 each coordinate phosphoenolpyruvate.

This sequence belongs to the EPSP synthase family. Monomer.

It is found in the cytoplasm. The enzyme catalyses 3-phosphoshikimate + phosphoenolpyruvate = 5-O-(1-carboxyvinyl)-3-phosphoshikimate + phosphate. The protein operates within metabolic intermediate biosynthesis; chorismate biosynthesis; chorismate from D-erythrose 4-phosphate and phosphoenolpyruvate: step 6/7. Functionally, catalyzes the transfer of the enolpyruvyl moiety of phosphoenolpyruvate (PEP) to the 5-hydroxyl of shikimate-3-phosphate (S3P) to produce enolpyruvyl shikimate-3-phosphate and inorganic phosphate. This is 3-phosphoshikimate 1-carboxyvinyltransferase from Jannaschia sp. (strain CCS1).